Consider the following 98-residue polypeptide: Large ribosomal subunit protein uL23 (98 aa).

Belongs to the universal ribosomal protein uL23 family. In terms of assembly, part of the 50S ribosomal subunit. Contacts protein L29, and trigger factor when it is bound to the ribosome.

Its function is as follows. One of the early assembly proteins it binds 23S rRNA. One of the proteins that surrounds the polypeptide exit tunnel on the outside of the ribosome. Forms the main docking site for trigger factor binding to the ribosome. The chain is Large ribosomal subunit protein uL23 from Koribacter versatilis (strain Ellin345).